We begin with the raw amino-acid sequence, 125 residues long: Large ribosomal subunit protein bL12 (125 aa).

Homodimer. Part of the ribosomal stalk of the 50S ribosomal subunit. Forms a multimeric L10(L12)X complex, where L10 forms an elongated spine to which 2 to 4 L12 dimers bind in a sequential fashion. Binds GTP-bound translation factors. Two isoforms seem to exist. One is probably dimethylated on Lys-69 and monomethylated on Lys-86 while the other is probably acetylated or trimethylated on both Lys-86 and Lys-89.

Forms part of the ribosomal stalk which helps the ribosome interact with GTP-bound translation factors. Is thus essential for accurate translation. In Rhodopseudomonas palustris (strain ATCC BAA-98 / CGA009), this protein is Large ribosomal subunit protein bL12.